The following is a 425-amino-acid chain: Serine--tRNA ligase (425 aa).

228–230 (TSE) contacts L-serine. 259 to 261 (RSE) is a binding site for ATP. Residue Glu-282 coordinates L-serine. 346-349 (EISS) serves as a coordination point for ATP. Residue Ser-384 coordinates L-serine.

It belongs to the class-II aminoacyl-tRNA synthetase family. Type-1 seryl-tRNA synthetase subfamily. Homodimer. The tRNA molecule binds across the dimer.

It localises to the cytoplasm. The enzyme catalyses tRNA(Ser) + L-serine + ATP = L-seryl-tRNA(Ser) + AMP + diphosphate + H(+). It carries out the reaction tRNA(Sec) + L-serine + ATP = L-seryl-tRNA(Sec) + AMP + diphosphate + H(+). It functions in the pathway aminoacyl-tRNA biosynthesis; selenocysteinyl-tRNA(Sec) biosynthesis; L-seryl-tRNA(Sec) from L-serine and tRNA(Sec): step 1/1. Its function is as follows. Catalyzes the attachment of serine to tRNA(Ser). Is also able to aminoacylate tRNA(Sec) with serine, to form the misacylated tRNA L-seryl-tRNA(Sec), which will be further converted into selenocysteinyl-tRNA(Sec). This chain is Serine--tRNA ligase, found in Ehrlichia ruminantium (strain Gardel).